The chain runs to 345 residues: Alpha-N-acetylneuraminide alpha-2,8-sialyltransferase (345 aa).

At 1–15 the chain is on the cytoplasmic side; sequence MKLQGSRMWLCPRTR. The helical; Signal-anchor for type II membrane protein transmembrane segment at 16–36 threads the bilayer; it reads LPVGASALGFLILCWLYVFPG. The Lumenal portion of the chain corresponds to 37–345; it reads YRLPGHKEMV…KKDVSSQKPH (309 aa). Residues Asn59 and Asn107 are each glycosylated (N-linked (GlcNAc...) asparagine). 2 disulfides stabilise this stretch: Cys126–Cys275 and Cys140–Cys335. Residues Asn131 and Asn154 each coordinate CMP-N-acetyl-beta-neuraminate. Substrate-binding positions include Asn154 and 176–178; that span reads NPS. Residue Asn233 is glycosylated (N-linked (GlcNAc...) asparagine). Residues Ser262, Thr263, Gly264, Trp284, and His298 each coordinate CMP-N-acetyl-beta-neuraminate. 262–264 is a binding site for substrate; sequence STG. His310 acts as the Proton donor/acceptor in catalysis.

It belongs to the glycosyltransferase 29 family.

The protein resides in the golgi apparatus membrane. The enzyme catalyses an N-acetyl-alpha-neuraminyl-(2-&gt;3)-beta-D-galactosyl derivative + CMP-N-acetyl-beta-neuraminate = an N-acetyl-alpha-neuraminyl-(2-&gt;8)-N-acetyl-alpha-neuraminyl-(2-&gt;3)-beta-D-galactosyl derivative + CMP + H(+). It catalyses the reaction a ganglioside GM3 (d18:1(4E)) + CMP-N-acetyl-beta-neuraminate = a ganglioside GD3 (d18:1(4E)) + CMP + H(+). It carries out the reaction a ganglioside GD3 (d18:1(4E)) + CMP-N-acetyl-beta-neuraminate = a ganglioside GT3 (d18:1(4E)) + CMP + H(+). The catalysed reaction is a ganglioside GD1a (d18:1(4E)) + CMP-N-acetyl-beta-neuraminate = a ganglioside GT1a (d18:1(4E)) + CMP + H(+). The enzyme catalyses a ganglioside GT1b (d18:1(4E)) + CMP-N-acetyl-beta-neuraminate = a ganglioside GQ1b (d18:1(4E)) + CMP + H(+). It catalyses the reaction a ganglioside GM1b (d18:1(4E)) + CMP-N-acetyl-beta-neuraminate = a ganglioside GD1c (d18:1(4E)) + CMP + H(+). It carries out the reaction a ganglioside GD3 + CMP-N-acetyl-beta-neuraminate = a ganglioside GT3 + CMP + H(+). The catalysed reaction is [alpha-N-acetylneuraminyl-(2-&gt;8)](n)-alpha-N-acetylneuraminyl-(2-&gt;8)-alpha-N-acetylneuraminyl-(2-&gt;3)-beta-D-galactosyl-(1-&gt;4)-beta-D-glucosyl-(1&lt;-&gt;1)-ceramide + CMP-N-acetyl-beta-neuraminate = [alpha-N-acetylneuraminyl-(2-&gt;8)](n+1)-alpha-N-acetylneuraminyl-(2-&gt;8)-alpha-N-acetylneuraminyl-(2-&gt;3)-beta-D-galactosyl-(1-&gt;4)-beta-D-glucosyl-(1&lt;-&gt;1)-ceramide + CMP + H(+). It participates in protein modification; protein glycosylation. The protein operates within lipid metabolism; sphingolipid metabolism. Its function is as follows. Catalyzes the addition of sialic acid in alpha 2,8-linkage to the sialic acid moiety of the ganglioside GM3 to form ganglioside GD3; gangliosides are a subfamily of complex glycosphingolipds that contain one or more residues of sialic acid. Glycosphingolipids are required for convergence extension movements during early development. Can catalyze the addition of a second alpha-2,8- sialic acid to GD3 to form GT3. Can use GM1b, GD1a and GT1b as acceptor substrates to synthesize GD1c, GT1a and GQ1b respectively. The chain is Alpha-N-acetylneuraminide alpha-2,8-sialyltransferase from Xenopus tropicalis (Western clawed frog).